The primary structure comprises 1214 residues: Zinc finger E-box-binding homeobox 2 (1214 aa).

The disordered stretch occupies residues 1–101 (MKQPIMADGP…GVEHPWHNNE (101 aa)). Residues 12-24 (CKRRKQANPRRKN) are compositionally biased toward basic residues. A compositionally biased stretch (polar residues) spans 57-74 (DQETSPASVPNHESSPHV). Residues 89-98 (REGGVEHPWH) are compositionally biased toward basic and acidic residues. S142 bears the Phosphoserine mark. 3 C2H2-type zinc fingers span residues 211-234 (LTCP…KYRH), 241-263 (FSCP…MVTH), and 282-304 (FKCT…LRIH). The C2H2-type 4; atypical zinc-finger motif lies at 310–334 (YECPNCKKRFSHSGSYSSHISSKKC). Residues S356, S360, and S364 each carry the phosphoserine modification. Position 377 is an N6-acetyllysine (K377). K391 participates in a covalent cross-link: Glycyl lysine isopeptide (Lys-Gly) (interchain with G-Cter in SUMO); alternate. K391 participates in a covalent cross-link: Glycyl lysine isopeptide (Lys-Gly) (interchain with G-Cter in SUMO2); alternate. Positions 437-487 (QHLGVGMEAPLLGFPTMNSNLSEVQKVLQIVDNTVSRQKMDCKAEEISKLK) are SMAD-MH2 binding domain. Residues K479 and K555 each participate in a glycyl lysine isopeptide (Lys-Gly) (interchain with G-Cter in SUMO2) cross-link. Residues 581–605 (FSCQFCKESFPGPIPLHQHERYLCK) form a C2H2-type 5; atypical zinc finger. Residues K611 and K632 each participate in a glycyl lysine isopeptide (Lys-Gly) (interchain with G-Cter in SUMO2) cross-link. Residues 644-703 (GMTSPINPYKDHMSVLKAYYAMNMEPNSDELLKISIAVGLPQEFVKEWFEQRKVYQYSNS) constitute a DNA-binding region (homeobox; atypical). At S647 the chain carries Phosphoserine. The segment covering 702 to 715 (NSRSPSLERSSKPL) has biased composition (low complexity). 3 disordered regions span residues 702-740 (NSRS…DSIT), 771-810 (PVEK…SSEE), and 832-857 (ATKN…ENSD). K713 is covalently cross-linked (Glycyl lysine isopeptide (Lys-Gly) (interchain with G-Cter in SUMO2)). S731 and S780 each carry phosphoserine. 2 stretches are compositionally biased toward low complexity: residues 780 to 808 (SNTP…SFSS) and 840 to 854 (SSIS…SSSE). T782 carries the phosphothreonine modification. S784 is modified (phosphoserine). A Glycyl lysine isopeptide (Lys-Gly) (interchain with G-Cter in SUMO); alternate cross-link involves residue K866. K866 participates in a covalent cross-link: Glycyl lysine isopeptide (Lys-Gly) (interchain with G-Cter in SUMO2); alternate. 2 consecutive C2H2-type zinc fingers follow at residues 999–1021 (YACD…KYEH) and 1027–1049 (HQCQ…SRLH). The C2H2-type 8; atypical zinc-finger motif lies at 1055–1076 (YQCDKCGKRFSHSGSYSQHMNH). Residues 1117 to 1214 (TPQGYSDSEE…HEEDNMEDGM (98 aa)) are disordered. A phosphoserine mark is found at S1122 and S1124. A compositionally biased stretch (basic and acidic residues) spans 1127–1155 (RESMPRDGESEKEHEKEGEDGYGKLGRQD). Over residues 1156–1167 (GDEEFEEEEEES) the composition is skewed to acidic residues. 2 stretches are compositionally biased toward basic and acidic residues: residues 1168 to 1179 (ENKSMDTDPETI) and 1186 to 1205 (GDHS…KSDH). Position 1203 is a phosphoserine (S1203).

The protein belongs to the delta-EF1/ZFH-1 C2H2-type zinc-finger family. In terms of assembly, binds activated SMAD1, activated SMAD2 and activated SMAD3; binding with SMAD4 is not detected. Interacts with CBX4 and CTBP1. In terms of processing, sumoylation on Lys-391 and Lys-866 is promoted by the E3 SUMO-protein ligase CBX4, and impairs interaction with CTBP1 and transcription repression activity.

The protein localises to the nucleus. Its subcellular location is the chromosome. In terms of biological role, transcriptional inhibitor that binds to DNA sequence 5'-CACCT-3' in different promoters. Represses transcription of E-cadherin. Represses expression of MEOX2. This Homo sapiens (Human) protein is Zinc finger E-box-binding homeobox 2.